The sequence spans 131 residues: Acanthoscurrin-2 (131 aa).

Lysine amide is present on K130.

Expressed in hemocytes and secreted into the plasma following bacterial immune challenge.

It localises to the secreted. Its function is as follows. Antimicrobial protein. Strong activity against the Gram-negative bacterium E.coli SBS363 and yeast C.albicans. No detectable activity against the Gram-positive bacterium M.luteus. This chain is Acanthoscurrin-2, found in Acanthoscurria gomesiana (Tarantula spider).